Here is a 456-residue protein sequence, read N- to C-terminus: Ribosomal protein uS12 methylthiotransferase RimO (456 aa).

The MTTase N-terminal domain occupies 11 to 126 (PKVGFVSLGC…VMQAVHTHLP (116 aa)). C20, C56, C85, C157, C161, and C164 together coordinate [4Fe-4S] cluster. Residues 143–384 (LTPKHYAYLK…MEVAEEVSAR (242 aa)) form the Radical SAM core domain. The region spanning 387–456 (QRKVGQTLRV…DGHDLWGEVA (70 aa)) is the TRAM domain.

It belongs to the methylthiotransferase family. RimO subfamily. [4Fe-4S] cluster serves as cofactor.

It is found in the cytoplasm. It carries out the reaction L-aspartate(89)-[ribosomal protein uS12]-hydrogen + (sulfur carrier)-SH + AH2 + 2 S-adenosyl-L-methionine = 3-methylsulfanyl-L-aspartate(89)-[ribosomal protein uS12]-hydrogen + (sulfur carrier)-H + 5'-deoxyadenosine + L-methionine + A + S-adenosyl-L-homocysteine + 2 H(+). Its function is as follows. Catalyzes the methylthiolation of an aspartic acid residue of ribosomal protein uS12. The polypeptide is Ribosomal protein uS12 methylthiotransferase RimO (Cupriavidus metallidurans (strain ATCC 43123 / DSM 2839 / NBRC 102507 / CH34) (Ralstonia metallidurans)).